The following is a 143-amino-acid chain: Endoribonuclease YbeY (143 aa).

Residues His109, His113, and His119 each contribute to the Zn(2+) site.

The protein belongs to the endoribonuclease YbeY family. Requires Zn(2+) as cofactor.

It is found in the cytoplasm. Functionally, single strand-specific metallo-endoribonuclease involved in late-stage 70S ribosome quality control and in maturation of the 3' terminus of the 16S rRNA. The polypeptide is Endoribonuclease YbeY (Carboxydothermus hydrogenoformans (strain ATCC BAA-161 / DSM 6008 / Z-2901)).